The primary structure comprises 407 residues: Imidazolonepropionase (407 aa).

Residues H68 and H70 each contribute to the Fe(3+) site. Residues H68 and H70 each contribute to the Zn(2+) site. 4-imidazolone-5-propanoate is bound by residues R77, Y140, and H173. Residue Y140 participates in N-formimidoyl-L-glutamate binding. H238 lines the Fe(3+) pocket. H238 provides a ligand contact to Zn(2+). Q241 is a 4-imidazolone-5-propanoate binding site. D313 is a binding site for Fe(3+). Position 313 (D313) interacts with Zn(2+). N-formimidoyl-L-glutamate contacts are provided by N315 and G317. T318 is a binding site for 4-imidazolone-5-propanoate.

Belongs to the metallo-dependent hydrolases superfamily. HutI family. Zn(2+) is required as a cofactor. The cofactor is Fe(3+).

It is found in the cytoplasm. The catalysed reaction is 4-imidazolone-5-propanoate + H2O = N-formimidoyl-L-glutamate. It participates in amino-acid degradation; L-histidine degradation into L-glutamate; N-formimidoyl-L-glutamate from L-histidine: step 3/3. Its function is as follows. Catalyzes the hydrolytic cleavage of the carbon-nitrogen bond in imidazolone-5-propanoate to yield N-formimidoyl-L-glutamate. It is the third step in the universal histidine degradation pathway. The protein is Imidazolonepropionase of Burkholderia ambifaria (strain ATCC BAA-244 / DSM 16087 / CCUG 44356 / LMG 19182 / AMMD) (Burkholderia cepacia (strain AMMD)).